A 398-amino-acid polypeptide reads, in one-letter code: MAIRTLDDLAAANRAIGVRVDINSPLTAAGGLADDARLRAHVDTLAELLAADARVAVLAHQGRPGGDEFARLERHADRLDALLDAPVSYCDATFSTGARDAVADLAPGEAVVLENTRFYSEEYMAFAPERAADTALVDGLAPALDAYVNDAFAAAHRSQPSLVGFPEVLPSYAGRVMEAELDALSGVADTPTPRTYVVGGAKVPDSVEVAAHALSHGLADNVLVTGVVANVFLAATGVDLGRASTDFIHERDYGTEIARAADLLAAHNDALHLPVDVAVERDGARCELSTDALPPAGDEAVCDIGSDTVDAYADVLADSETVVVNGPAGVFEDDLFADGTRGVFDAASEVEHSIVGGGDTAAAIRRFDITGFDHVSTGGGAAINLLTDADLPAVAALR.

Substrate contacts are provided by residues 21-23 (DIN), arginine 37, 60-63 (HQGR), arginine 117, and arginine 157. ATP-binding positions include glutamate 332 and 357–360 (GGDT).

The protein belongs to the phosphoglycerate kinase family. In terms of assembly, monomer.

It is found in the cytoplasm. The enzyme catalyses (2R)-3-phosphoglycerate + ATP = (2R)-3-phospho-glyceroyl phosphate + ADP. It participates in carbohydrate degradation; glycolysis; pyruvate from D-glyceraldehyde 3-phosphate: step 2/5. This Halobacterium salinarum (strain ATCC 29341 / DSM 671 / R1) protein is Phosphoglycerate kinase.